The following is a 194-amino-acid chain: Ribonuclease HII (194 aa).

The RNase H type-2 domain occupies 1 to 194 (MTVGVDEVGR…RLFPRDDGLR (194 aa)). The a divalent metal cation site is built by D6, E7, and D102.

Belongs to the RNase HII family. The cofactor is Mn(2+). Mg(2+) serves as cofactor.

It localises to the cytoplasm. The catalysed reaction is Endonucleolytic cleavage to 5'-phosphomonoester.. Endonuclease that specifically degrades the RNA of RNA-DNA hybrids. This Synechococcus sp. (strain WH7803) protein is Ribonuclease HII.